Consider the following 227-residue polypeptide: Aspartyl protease inhibitor (227 aa).

The N-terminal stretch at 1-15 is a signal peptide; that stretch reads MKLVVLCVLCGIALA. Basic and acidic residues predominate over residues 88-109; sequence SLKSRMAGKKEKAVTPKEEDLP. The tract at residues 88–116 is disordered; that stretch reads SLKSRMAGKKEKAVTPKEEDLPKAPQKPS. A disulfide bond links Cys-131 and Cys-223.

Belongs to the protease inhibitor I33 family.

The protein localises to the secreted. In terms of biological role, aspartyl protease inhibitor. The chain is Aspartyl protease inhibitor (API) from Ostertagia ostertagi (Brown stomach worm).